The chain runs to 102 residues: Alpha-hemoglobin-stabilizing protein (102 aa).

The protein belongs to the AHSP family. Monomer. Forms a heterodimer with free alpha-hemoglobin. Does not bind beta-hemoglobin nor alpha(2)beta(2) hemoglobin A. As to expression, expressed in blood and bone marrow.

It is found in the cytoplasm. In terms of biological role, acts as a chaperone to prevent the harmful aggregation of alpha-hemoglobin during normal erythroid cell development. Specifically protects free alpha-hemoglobin from precipitation. It is predicted to modulate pathological states of alpha-hemoglobin excess such as beta-thalassemia. The protein is Alpha-hemoglobin-stabilizing protein (AHSP) of Homo sapiens (Human).